The primary structure comprises 236 residues: Phosphoribosylaminoimidazole-succinocarboxamide synthase (236 aa).

Belongs to the SAICAR synthetase family.

It catalyses the reaction 5-amino-1-(5-phospho-D-ribosyl)imidazole-4-carboxylate + L-aspartate + ATP = (2S)-2-[5-amino-1-(5-phospho-beta-D-ribosyl)imidazole-4-carboxamido]succinate + ADP + phosphate + 2 H(+). It participates in purine metabolism; IMP biosynthesis via de novo pathway; 5-amino-1-(5-phospho-D-ribosyl)imidazole-4-carboxamide from 5-amino-1-(5-phospho-D-ribosyl)imidazole-4-carboxylate: step 1/2. The polypeptide is Phosphoribosylaminoimidazole-succinocarboxamide synthase (Pseudomonas paraeruginosa (strain DSM 24068 / PA7) (Pseudomonas aeruginosa (strain PA7))).